We begin with the raw amino-acid sequence, 197 residues long: Cerebellin-3 (197 aa).

The N-terminal stretch at methionine 1–alanine 24 is a signal peptide. In terms of domain architecture, C1q spans alanine 59–leucine 197. A necessary for interaction with CBLN3, and homotrimerization region spans residues valine 64–leucine 197. A glycan (N-linked (GlcNAc...) asparagine) is linked at asparagine 82.

As to quaternary structure, heterohexamer; disulfide-linked heterotrimers. Interacts with CBLN1. May also form oligomers with CBLN2 and CBLN4. In terms of tissue distribution, expressed in brain, restricted to the cerebellar cortex. Within the cerebellum, expressed in granule layers (at protein level). Also detected in postsynaptic Purkinje cell spines (at protein level).

Its subcellular location is the endoplasmic reticulum. The protein resides in the golgi apparatus. It is found in the cis-Golgi network. It localises to the secreted. The protein localises to the synapse. In terms of biological role, may be involved in synaptic functions in the CNS. This Mus musculus (Mouse) protein is Cerebellin-3 (Cbln3).